The sequence spans 525 residues: Cobyric acid synthase (525 aa).

The region spanning 251 to 452 is the GATase cobBQ-type domain; sequence ELEIAVLYLP…FHGIFDNDLL (202 aa). Catalysis depends on C332, which acts as the Nucleophile. The active site involves H444.

The protein belongs to the CobB/CobQ family. CobQ subfamily.

It functions in the pathway cofactor biosynthesis; adenosylcobalamin biosynthesis. Its function is as follows. Catalyzes amidations at positions B, D, E, and G on adenosylcobyrinic A,C-diamide. NH(2) groups are provided by glutamine, and one molecule of ATP is hydrogenolyzed for each amidation. This chain is Cobyric acid synthase, found in Pelotomaculum thermopropionicum (strain DSM 13744 / JCM 10971 / SI).